The primary structure comprises 266 residues: Tryptophan synthase alpha chain (266 aa).

Residues Glu-50 and Asp-61 each act as proton acceptor in the active site.

Belongs to the TrpA family. In terms of assembly, tetramer of two alpha and two beta chains.

The catalysed reaction is (1S,2R)-1-C-(indol-3-yl)glycerol 3-phosphate + L-serine = D-glyceraldehyde 3-phosphate + L-tryptophan + H2O. It participates in amino-acid biosynthesis; L-tryptophan biosynthesis; L-tryptophan from chorismate: step 5/5. Functionally, the alpha subunit is responsible for the aldol cleavage of indoleglycerol phosphate to indole and glyceraldehyde 3-phosphate. This Alkaliphilus metalliredigens (strain QYMF) protein is Tryptophan synthase alpha chain.